A 670-amino-acid chain; its full sequence is WD repeat-containing protein 48 homolog (670 aa).

WD repeat units follow at residues 13 to 52 (RHRNGVNALQLDPVNGRLYSAGRDAIIRVWNSTQTSSQEP), 59 to 98 (HHNDWVNDIVLCCGGRNLISASCDTTVKVWNAHKGFCMST), 101 to 140 (THRDYVQALAYAKDREQVASAGLDKAIFLWDVNTLTALTA), 152 to 191 (GSKDSIYSLAMNPSGTIIVSGSTENTLRIWDPRTCNKIAK), 194 to 233 (GHTENVKALVVSEDGTQVVSGSSDGKIKLWSIGQQRCIQT), 236 to 275 (VHSEGVWALLMTDNFSHVISGSRDKKIVMTELRNPTNSVL), and 278 to 317 (EERAPVLSLCYNIDQTGIWATTWNSDVRCWKLNKTDKLSN). Residues 321–348 (SSNSSINSGGGGDGTPVTNSASNATPAS) are disordered. The span at 338–348 (TNSASNATPAS) shows a compositional bias: low complexity. The stretch at 359-398 (KGGAAIKKYHVLNDKRFMLTKDSEQNVAIYDVLKVKKVED) is one WD 8 repeat. Positions 613–625 (GGGGGSSTGGGGN) are enriched in gly residues. The segment at 613–645 (GGGGGSSTGGGGNSNSSQNNSQSDANSEGSQVP) is disordered. A compositionally biased stretch (low complexity) spans 626–635 (SNSSQNNSQS).

Belongs to the WD repeat WDR48 family. As to quaternary structure, catalytic component of the Usp12-46 deubiquitylase complex consisting of Usp12-46, Wdr20 and Uaf1; regulatory subunit that, together wtih Wdr20, stabilizes Usp12-46. The Usp12-46 deubiquitylase complex associates with arr/arrow; the interaction leads to deubiquitination and stabilization of arr/arrow.

Its function is as follows. Regulatory component of the Usp12-46 deubiquitylase complex. activates deubiquitination by increasing the catalytic turnover without increasing the affinity of deubiquitinating enzymes for the substrate. The complex deubiquitylates the wg/wingless-signaling receptor arr/arrow, which stabilizes the receptor and increases its concentration at the cell surface; this enhances the sensitivity of cells to wg/wingless-signal stimulation. This increases the amplitude and spatial range of the signaling response to the wg/wingless morphogen gradient, facilitating the precise concentration-dependent regulation of its target genes. Together with Wdr20 and Usp12-46 required for wg/wingless-mediated signaling in the wing imaginal disc and for wg/wingless-dependent regulation of intestinal stem cell proliferation. The chain is WD repeat-containing protein 48 homolog from Culex quinquefasciatus (Southern house mosquito).